Reading from the N-terminus, the 89-residue chain is Small ribosomal subunit protein uS15 (89 aa).

The protein belongs to the universal ribosomal protein uS15 family. As to quaternary structure, part of the 30S ribosomal subunit. Forms a bridge to the 50S subunit in the 70S ribosome, contacting the 23S rRNA.

In terms of biological role, one of the primary rRNA binding proteins, it binds directly to 16S rRNA where it helps nucleate assembly of the platform of the 30S subunit by binding and bridging several RNA helices of the 16S rRNA. Functionally, forms an intersubunit bridge (bridge B4) with the 23S rRNA of the 50S subunit in the ribosome. The chain is Small ribosomal subunit protein uS15 from Klebsiella pneumoniae (strain 342).